We begin with the raw amino-acid sequence, 98 residues long: NADH-ubiquinone oxidoreductase chain 4L (98 aa).

The next 3 helical transmembrane spans lie at 2–22 (PSIF…TLVF), 29–49 (SLLC…LIIL), and 61–81 (ILLL…LVMV).

This sequence belongs to the complex I subunit 4L family. In terms of assembly, core subunit of respiratory chain NADH dehydrogenase (Complex I) which is composed of 45 different subunits.

Its subcellular location is the mitochondrion inner membrane. The enzyme catalyses a ubiquinone + NADH + 5 H(+)(in) = a ubiquinol + NAD(+) + 4 H(+)(out). Core subunit of the mitochondrial membrane respiratory chain NADH dehydrogenase (Complex I) which catalyzes electron transfer from NADH through the respiratory chain, using ubiquinone as an electron acceptor. Part of the enzyme membrane arm which is embedded in the lipid bilayer and involved in proton translocation. The chain is NADH-ubiquinone oxidoreductase chain 4L (MT-ND4L) from Avahi laniger (Eastern woolly lemur).